A 201-amino-acid polypeptide reads, in one-letter code: MKKTAKTDTEDAFKFRSTFGEHYYDGYGARHETPHIVAYTGEVTAAGPGRVLISSPLGSCIAVCAYDPGTRVGGLAHVMLPGVPPAHAETGKDRYAAHALETLFSVMQNEGADPGNLLICLIGGANVLRREHDTIHIDNLRSLTSLILQRNLPICRTMTGGSERMMARMETKTGRIFQTTGNNPEEMLFDYFTHNIENPDN.

It belongs to the CheD family.

It catalyses the reaction L-glutaminyl-[protein] + H2O = L-glutamyl-[protein] + NH4(+). Probably deamidates glutamine residues to glutamate on methyl-accepting chemotaxis receptors (MCPs), playing an important role in chemotaxis. This chain is Probable chemoreceptor glutamine deamidase CheD, found in Chlorobium luteolum (strain DSM 273 / BCRC 81028 / 2530) (Pelodictyon luteolum).